The following is a 247-amino-acid chain: Complement C1q subcomponent subunit B (247 aa).

A signal peptide spans 1-22 (MKTPRGSVLVLLLLNLLRVSWA). Gln23 is modified (pyrrolidone carboxylic acid). 4-hydroxyproline is present on residues Pro29, Pro32, Pro35, Pro47, and Pro50. The segment at 30-78 (SIPGIPGIPGKPGSDGKPGTPGTKGEKGLPGLVSHLNENGEKGDPGFPG) is disordered. In terms of domain architecture, Collagen-like spans 39 to 98 (GKPGSDGKPGTPGTKGEKGLPGLVSHLNENGEKGDPGFPGMPGKVGPKGPIGPKGVPGPP). Residues 40–52 (KPGSDGKPGTPGT) show a composition bias toward low complexity. Lys53 and Lys56 each carry 5-hydroxylysine. At Pro59 the chain carries 4-hydroxyproline. Lys71 bears the 5-hydroxylysine mark. 2 positions are modified to 4-hydroxyproline: Pro77 and Pro80. 5-hydroxylysine occurs at positions 86 and 92. 4-hydroxyproline is present on residues Pro95 and Pro98. Lys104 carries the 5-hydroxylysine modification. One can recognise a C1q domain in the interval 111 to 247 (KATQKIAFSA…GFMLFPDTEA (137 aa)). Residues Cys175 and Cys192 are joined by a disulfide bond. Ca(2+)-binding residues include Asp193, Tyr194, and Gln200.

As to quaternary structure, core component of the complement C1 complex, a calcium-dependent complex composed of 1 molecule of the C1Q subcomplex, 2 molecules of C1R and 2 molecules of C1S. The C1Q subcomplex is composed 18 subunits: 3 chains of C1QA, C1QB, and C1QC trimerize to form 6 collagen-like triple helices connected to six globular ligand-recognition modules (C1q domain). Post-translationally, hydroxylated on lysine and proline residues. Hydroxylated lysine residues can be glycosylated. Bovine C1Q contains up to 66.3 hydroxylysine-galactosylglucose residues. Total percentage hydroxylysine residues glycosylated is 92.0%. Contains no hydroxylysine-monosaccharides.

The protein resides in the secreted. It is found in the cell surface. With respect to regulation, the C1Q subcomplex is inhibited by sulfated molecules, such as triterpenoid sulfates, heparan sulfate, or chondroitin sulfates. Core component of the complement C1 complex, a multiprotein complex that initiates the classical pathway of the complement system, a cascade of proteins that leads to phagocytosis and breakdown of pathogens and signaling that strengthens the adaptive immune system. The classical complement pathway is initiated by the C1Q subcomplex of the C1 complex, which specifically binds IgG or IgM immunoglobulins complexed with antigens, forming antigen-antibody complexes on the surface of pathogens: C1QA, together with C1QB and C1QC, specifically recognizes and binds the Fc regions of IgG or IgM via its C1q domain. Immunoglobulin-binding activates the proenzyme C1R, which cleaves C1S, initiating the proteolytic cascade of the complement system. The C1Q subcomplex is activated by a hexamer of IgG complexed with antigens, while it is activated by a pentameric IgM. The C1Q subcomplex also recognizes and binds phosphatidylserine exposed on the surface of cells undergoing programmed cell death, possibly promoting activation of the complement system. The protein is Complement C1q subcomponent subunit B (C1QB) of Bos taurus (Bovine).